The sequence spans 134 residues: Small ribosomal subunit protein uS11 (134 aa).

This sequence belongs to the universal ribosomal protein uS11 family. As to quaternary structure, part of the 30S ribosomal subunit. Interacts with proteins S7 and S18. Binds to IF-3.

Located on the platform of the 30S subunit, it bridges several disparate RNA helices of the 16S rRNA. Forms part of the Shine-Dalgarno cleft in the 70S ribosome. This chain is Small ribosomal subunit protein uS11, found in Micrococcus luteus (strain ATCC 4698 / DSM 20030 / JCM 1464 / CCM 169 / CCUG 5858 / IAM 1056 / NBRC 3333 / NCIMB 9278 / NCTC 2665 / VKM Ac-2230) (Micrococcus lysodeikticus).